We begin with the raw amino-acid sequence, 530 residues long: Arginine--tRNA ligase (530 aa).

A 'HIGH' region motif is present at residues 113–123 (ANPTGPLHIGH).

It belongs to the class-I aminoacyl-tRNA synthetase family. As to quaternary structure, monomer.

The protein resides in the cytoplasm. It carries out the reaction tRNA(Arg) + L-arginine + ATP = L-arginyl-tRNA(Arg) + AMP + diphosphate. The protein is Arginine--tRNA ligase of Campylobacter jejuni subsp. jejuni serotype O:6 (strain 81116 / NCTC 11828).